The primary structure comprises 92 residues: Progonadoliberin-1 (92 aa).

Positions 1-23 (MKPIQKLLAGLILLTWCVEGCSS) are cleaved as a signal peptide. The residue at position 24 (glutamine 24) is a Pyrrolidone carboxylic acid. Glycine amide is present on glycine 33.

Belongs to the GnRH family. In terms of processing, the precursor is cleaved by ACE, which removes the Gly-Lys-Arg peptide at the C-terminus, leading to mature hormone. The mature form of Gonadoliberin-1 is also cleaved and degraded by ACE.

Its subcellular location is the secreted. In terms of biological role, stimulates the secretion of gonadotropins; it stimulates the secretion of both luteinizing and follicle-stimulating hormones. This Homo sapiens (Human) protein is Progonadoliberin-1 (GNRH1).